The following is a 1574-amino-acid chain: Plexin-C1 (1574 aa).

An N-terminal signal peptide occupies residues 1-34 (MEVSRRKTPPRPPYPAAPLPLIAYLLALAAPARG). The Sema domain occupies 35-452 (ADEPVWRSEQ…AGKEVRRIPV (418 aa)). The Extracellular portion of the chain corresponds to 35 to 950 (ADEPVWRSEQ…YVEQESVPST (916 aa)). A disulfide bridge connects residues C64 and C87. 3 N-linked (GlcNAc...) asparagine glycosylation sites follow: N86, N143, and N149. An intrachain disulfide couples C156 to C194. A glycan (N-linked (GlcNAc...) asparagine) is linked at N252. C283 and C329 are disulfide-bonded. N-linked (GlcNAc...) asparagine glycans are attached at residues N386 and N407. 4 cysteine pairs are disulfide-bonded: C455-C472, C461-C506, C464-C481, and C475-C487. N-linked (GlcNAc...) asparagine glycosylation is found at N694, N773, and N802. A helical transmembrane segment spans residues 951 to 971 (WYFLIALPILLAIVIVVAVVV). At 972–1574 (TRYKSKELSR…FDEKKKCKWM (603 aa)) the chain is on the cytoplasmic side. S984 carries the post-translational modification Phosphoserine.

Belongs to the plexin family. In terms of assembly, monomer. Homodimer. Interacts with SEMA7A. In terms of tissue distribution, detected on dendritic cells, skin Langerhans cells and neutrophils (at protein level).

The protein localises to the membrane. Its function is as follows. Receptor for SEMA7A, for vaccinia virus semaphorin A39R and for herpesvirus Sema protein. Binding of semaphorins triggers cellular responses leading to the rearrangement of the cytoskeleton and to secretion of IL6 and IL8. The chain is Plexin-C1 (Plxnc1) from Mus musculus (Mouse).